The sequence spans 300 residues: Dihydroorotate dehydrogenase B (NAD(+)), catalytic subunit (300 aa).

FMN contacts are provided by residues Ser-20 and 44 to 45 (KG). Substrate is bound by residues Lys-44 and 68–72 (NAIGL). Residues Asn-98 and Asn-125 each contribute to the FMN site. Asn-125 lines the substrate pocket. The active-site Nucleophile is the Cys-128. FMN-binding residues include Lys-163 and Ile-189. Residue 190–191 (NT) coordinates substrate. Residues Gly-215, 241–242 (GG), and 263–264 (GT) contribute to the FMN site.

It belongs to the dihydroorotate dehydrogenase family. Type 1 subfamily. In terms of assembly, heterotetramer of 2 PyrK and 2 PyrD type B subunits. The cofactor is FMN.

It localises to the cytoplasm. It catalyses the reaction (S)-dihydroorotate + NAD(+) = orotate + NADH + H(+). It participates in pyrimidine metabolism; UMP biosynthesis via de novo pathway; orotate from (S)-dihydroorotate (NAD(+) route): step 1/1. In terms of biological role, catalyzes the conversion of dihydroorotate to orotate with NAD(+) as electron acceptor. The sequence is that of Dihydroorotate dehydrogenase B (NAD(+)), catalytic subunit (pyrD) from Lachnoclostridium phytofermentans (strain ATCC 700394 / DSM 18823 / ISDg) (Clostridium phytofermentans).